Reading from the N-terminus, the 149-residue chain is Snake venom vascular endothelial growth factor toxin 2 (149 aa).

A signal peptide spans 1-24 (MAAYLLAVAILFCIQGWPSGTVQG). Residue Gln-25 is modified to Pyrrolidone carboxylic acid. Disulfide bonds link Cys-38–Cys-80, Cys-69–Cys-115, and Cys-73–Cys-117. The segment at 118-149 (RPRSGRVNSGKRKRNPEEGGAESQVPLGLTSF) is disordered.

This sequence belongs to the PDGF/VEGF growth factor family. Snake venom VEGF subfamily. In terms of assembly, homodimer; disulfide-linked. Interacts with VEGF receptor-1 (FLT1) with a high affinity, whereas it binds to VEGF receptor-2 (KDR) with a low affinity. Does not bind VEGF receptor-3 (FLT4). In terms of tissue distribution, expressed by the venom gland.

It localises to the secreted. Its function is as follows. Snake venom VEGFs that may contribute to venom dispersion and prey subjugation by inducing vascular permeability and hypotension. This protein induces an increase in capillary permeability after intradermal injection, as well as a drastic hypotensive effect after intravenous injection. The hypotension is mediated by nitric oxide (NO), which is produced by VEGF-activated endothelium NO synthase. Also induces angiogenesis in vitro. Like other crotalid VEGFs, this protein interacts with VEGF receptor-1 (FLT1) with a high affinity, whereas it binds to VEGF receptor-2 (KDR) with a low affinity. This is Snake venom vascular endothelial growth factor toxin 2 from Sistrurus catenatus edwardsii (Desert massasauga).